Consider the following 336-residue polypeptide: Urokinase plasminogen activator surface receptor (336 aa).

The first 23 residues, 1–23, serve as a signal peptide directing secretion; that stretch reads MGHPLLLPLLLLLLHTGVPASWG. UPAR/Ly6 domains are found at residues 24–111, 116–208, and 215–302; these read LRCM…VTFP, LECI…LSLA, and HRCY…EDIQ. 3 disulfides stabilise this stretch: cysteine 26-cysteine 47, cysteine 29-cysteine 35, and cysteine 40-cysteine 68. A glycan (N-linked (GlcNAc...) asparagine) is linked at asparagine 75. 11 disulfides stabilise this stretch: cysteine 94-cysteine 99, cysteine 118-cysteine 145, cysteine 121-cysteine 128, cysteine 138-cysteine 170, cysteine 176-cysteine 193, cysteine 194-cysteine 199, cysteine 217-cysteine 245, cysteine 220-cysteine 228, cysteine 238-cysteine 264, cysteine 270-cysteine 288, and cysteine 289-cysteine 294. N-linked (GlcNAc...) asparagine glycosylation is found at asparagine 195 and asparagine 223.

In terms of assembly, monomer. Interacts (via the UPAR/Ly6 domains) with SRPX2. Interacts with MRC2. Interacts with FAP (seprase); the interaction occurs at the cell surface of invadopodia membrane. Interacts with SORL1 (via N-terminal ectodomain); this interaction decreases PLAUR internalization. The ternary complex composed of PLAUR-PLAU-SERPINE1 also interacts with SORL1.

It is found in the cell membrane. Its subcellular location is the cell projection. The protein resides in the invadopodium membrane. In terms of biological role, acts as a receptor for urokinase plasminogen activator. Plays a role in localizing and promoting plasmin formation. Mediates the proteolysis-independent signal transduction activation effects of U-PA. It is subject to negative-feedback regulation by U-PA which cleaves it into an inactive form. This is Urokinase plasminogen activator surface receptor (PLAUR) from Aotus trivirgatus (Three-striped night monkey).